Reading from the N-terminus, the 317-residue chain is Small ribosomal subunit protein uS2 (317 aa).

The tract at residues 277-317 (SDWTAPAANPANAAAAGAPAPAPAAATTTESWGGSGAENWG) is disordered. A compositionally biased stretch (low complexity) spans 281-302 (APAANPANAAAAGAPAPAPAAA).

It belongs to the universal ribosomal protein uS2 family. In terms of assembly, component of the small ribosomal subunit. Mature ribosomes consist of a small (40S) and a large (60S) subunit. The 40S subunit contains about 33 different proteins and 1 molecule of RNA (18S). The 60S subunit contains about 49 different proteins and 3 molecules of RNA (28S, 5.8S and 5S). Interacts with ribosomal protein S21.

The protein localises to the cytoplasm. Required for the assembly and/or stability of the 40S ribosomal subunit. Required for the processing of the 20S rRNA-precursor to mature 18S rRNA in a late step of the maturation of 40S ribosomal subunits. In Urechis caupo (Innkeeper worm), this protein is Small ribosomal subunit protein uS2.